A 310-amino-acid polypeptide reads, in one-letter code: Methionyl-tRNA formyltransferase (310 aa).

109–112 (SLLP) contributes to the (6S)-5,6,7,8-tetrahydrofolate binding site.

The protein belongs to the Fmt family.

It carries out the reaction L-methionyl-tRNA(fMet) + (6R)-10-formyltetrahydrofolate = N-formyl-L-methionyl-tRNA(fMet) + (6S)-5,6,7,8-tetrahydrofolate + H(+). Attaches a formyl group to the free amino group of methionyl-tRNA(fMet). The formyl group appears to play a dual role in the initiator identity of N-formylmethionyl-tRNA by promoting its recognition by IF2 and preventing the misappropriation of this tRNA by the elongation apparatus. The polypeptide is Methionyl-tRNA formyltransferase (Pseudomonas putida (strain ATCC 700007 / DSM 6899 / JCM 31910 / BCRC 17059 / LMG 24140 / F1)).